The chain runs to 138 residues: 18 kDa antigen 2 (138 aa).

Residues 21-131 (GTRRPAVMPM…KPRRIEINHN (111 aa)) enclose the sHSP domain.

It belongs to the small heat shock protein (HSP20) family.

Its function is as follows. Not known. This protein is one of the major immune reactive proteins in mycobacteria. This chain is 18 kDa antigen 2, found in Mycobacterium avium.